The chain runs to 142 residues: Hemoglobin subunit zeta (142 aa).

Ser-2 is modified (N-acetylserine). The Globin domain maps to 2–142 (SLTKTERTII…VSSVLTEKYR (141 aa)). Thr-29 bears the Phosphothreonine mark. Ser-53 is subject to Phosphoserine. Heme b is bound at residue His-59. Phosphoserine occurs at positions 73 and 82. His-88 provides a ligand contact to heme b.

This sequence belongs to the globin family. In terms of assembly, heterotetramer of two zeta chains and two epsilon chains in early embryonic hemoglobin Gower-1; two zeta chains and two gamma chains in fetal hemoglobin Portland-1. Heterotetramer of two zeta chains and two beta chains in hemoglobin Portland-2, detected in fetuses and neonates with homozygous alpha-thalassemia. As to expression, detected in fetal erythrocytes (at protein level).

In terms of biological role, the zeta chain is an alpha-type chain of mammalian embryonic hemoglobin. The protein is Hemoglobin subunit zeta (HBZ) of Homo sapiens (Human).